The following is a 350-amino-acid chain: tRNA-splicing endonuclease (350 aa).

Active-site residues include tyrosine 286, histidine 297, and lysine 328.

The protein belongs to the tRNA-intron endonuclease family. Archaeal long subfamily. As to quaternary structure, homodimer.

It catalyses the reaction pretRNA = a 3'-half-tRNA molecule with a 5'-OH end + a 5'-half-tRNA molecule with a 2',3'-cyclic phosphate end + an intron with a 2',3'-cyclic phosphate and a 5'-hydroxyl terminus.. Its function is as follows. Endonuclease that removes tRNA introns. Cleaves pre-tRNA at the 5'- and 3'-splice sites to release the intron. The products are an intron and two tRNA half-molecules bearing 2',3' cyclic phosphate and 5'-OH termini. Recognizes a pseudosymmetric substrate in which 2 bulged loops of 3 bases are separated by a stem of 4 bp. This Methanosarcina acetivorans (strain ATCC 35395 / DSM 2834 / JCM 12185 / C2A) protein is tRNA-splicing endonuclease.